A 181-amino-acid polypeptide reads, in one-letter code: MIDTDGYRPNVGIIICNNNAQVLWAKRFGQHSWQFPQGGIKEGETPEQAMYRELYEEVGLKPEHVKLLATSRHWLRYKLPKRLVRWDSPDPVCIGQKQRWFLLQLISDEQQIEFEACGNPEFDAWRWVTYWYPVRQVVSFKCEVYRCALKEFSAVAFSLMKKSSDKKRNKRPRRASFYKKR.

The Nudix hydrolase domain occupies 6-150 (GYRPNVGIII…KCEVYRCALK (145 aa)). The Nudix box signature appears at 38–59 (GGIKEGETPEQAMYRELYEEVG).

The protein belongs to the Nudix hydrolase family. RppH subfamily. The cofactor is a divalent metal cation.

Its function is as follows. Accelerates the degradation of transcripts by removing pyrophosphate from the 5'-end of triphosphorylated RNA, leading to a more labile monophosphorylated state that can stimulate subsequent ribonuclease cleavage. The chain is RNA pyrophosphohydrolase from Psychromonas ingrahamii (strain DSM 17664 / CCUG 51855 / 37).